A 599-amino-acid polypeptide reads, in one-letter code: Putative sensor histidine kinase NtrY-like (599 aa).

4 helical membrane-spanning segments follow: residues 17–37, 44–64, 85–105, and 285–305; these read ILIL…FYVI, FSTI…LGIL, IVIA…VFSV, and IMFI…GVLF. The HAMP domain occupies 307-361; sequence AQIVKPIKKLVTATDKVKDGDLTVQVPENEVDKDEIGTLYVAFNRMIKQLSRQQR. The Histidine kinase domain occupies 378-589; sequence KVAHEIKNPL…IIDIKFDLKE (212 aa). Residue histidine 381 is modified to Phosphohistidine; by autocatalysis.

It is found in the cell membrane. The catalysed reaction is ATP + protein L-histidine = ADP + protein N-phospho-L-histidine.. Its function is as follows. Member of the two-component regulatory system RT0603/RT0550. The protein is Putative sensor histidine kinase NtrY-like of Rickettsia typhi (strain ATCC VR-144 / Wilmington).